A 340-amino-acid chain; its full sequence is MIQNEIPIPAEALQWKCIESKIDSERLHYGRFAISPLRPGQANTVGIAIRRALLGEIEGTCITYVKFEKVTHEYSTIMGIQESVHDILINLKEIVLKSNSYKTQEASISILGPKRVTAEDIVLPSSVEVIDATQHIATITKAVYFNIKLGIRKDRGYRIENPVKYEDGNFAVNAAFTPIRNANYSVHSFENEKEKQEILFIEVWTNGSLTPKEALREASQSLINLFIPLLHEKKERENRKLENKDEYNVLRSCFSLTNIGEVRKEISFKHIFIDQLELPARAYNGLKKVDVHTISDLLNYSQEDLMKIKNFGKKSIQQVVEALQKHFAIHLPKNKFSIND.

The alpha N-terminal domain (alpha-NTD) stretch occupies residues 1-233 (MIQNEIPIPA…NLFIPLLHEK (233 aa)). The tract at residues 263-340 (RKEISFKHIF…LPKNKFSIND (78 aa)) is alpha C-terminal domain (alpha-CTD).

It belongs to the RNA polymerase alpha chain family. As to quaternary structure, in plastids the minimal PEP RNA polymerase catalytic core is composed of four subunits: alpha, beta, beta', and beta''. When a (nuclear-encoded) sigma factor is associated with the core the holoenzyme is formed, which can initiate transcription.

The protein resides in the plastid. Its subcellular location is the chloroplast. The enzyme catalyses RNA(n) + a ribonucleoside 5'-triphosphate = RNA(n+1) + diphosphate. Its function is as follows. DNA-dependent RNA polymerase catalyzes the transcription of DNA into RNA using the four ribonucleoside triphosphates as substrates. The sequence is that of DNA-directed RNA polymerase subunit alpha (rpoA) from Anthoceros angustus (Hornwort).